A 156-amino-acid chain; its full sequence is Ribosomal RNA large subunit methyltransferase H (156 aa).

S-adenosyl-L-methionine contacts are provided by residues leucine 73, glycine 104, and 123–128 (LSPLTL).

The protein belongs to the RNA methyltransferase RlmH family. As to quaternary structure, homodimer.

It is found in the cytoplasm. The catalysed reaction is pseudouridine(1915) in 23S rRNA + S-adenosyl-L-methionine = N(3)-methylpseudouridine(1915) in 23S rRNA + S-adenosyl-L-homocysteine + H(+). Its function is as follows. Specifically methylates the pseudouridine at position 1915 (m3Psi1915) in 23S rRNA. This is Ribosomal RNA large subunit methyltransferase H from Edwardsiella ictaluri (strain 93-146).